The chain runs to 95 residues: Small ribosomal subunit protein uS19 (95 aa).

It belongs to the universal ribosomal protein uS19 family.

Its function is as follows. Protein S19 forms a complex with S13 that binds strongly to the 16S ribosomal RNA. The protein is Small ribosomal subunit protein uS19 of Roseiflexus castenholzii (strain DSM 13941 / HLO8).